Reading from the N-terminus, the 285-residue chain is Bark agglutinin I polypeptide A (285 aa).

A signal peptide spans 1-31; it reads MTSYNFKTQTSFPLLLSISFFFLLLLNKVNS. N147 carries N-linked (GlcNAc...) asparagine glycosylation. 2 residues coordinate Mn(2+): E156 and D158. Ca(2+) is bound by residues D158, F160, N162, and D166. Positions 166 and 171 each coordinate Mn(2+). The N-linked (GlcNAc...) asparagine glycan is linked to N188.

The protein belongs to the leguminous lectin family. In terms of assembly, RPbAI is composed of two polypeptides, A and B, that associate into five different tetrameric isolectins. The A4 combination is the only one devoid of agglutination activity. Isoform B4 displays maximal agglutination activity. In terms of tissue distribution, strong expression in seed. Lower levels in the flower, and the bark of the roots. No expression in leaf. The lectin accumulates in the inner bark in autumn.

Functionally, N-acetyl-D-galactosamine specific lectin. Bark lectins are storage protein that probably maintains stocks of nitrogen during dormant period. Self-aggregatable molecules that can bind their own carbohydrate side chains. They could also play a role in the plant's defense against phytophagous invertebrates or herbivorous higher animals. The polypeptide is Bark agglutinin I polypeptide A (Robinia pseudoacacia (Black locust)).